An 829-amino-acid chain; its full sequence is pre-rRNA 2'-O-ribose RNA methyltransferase FTSJ3 (829 aa).

Residues Gly56, Trp58, Asp76, Asp92, and Asp117 each coordinate S-adenosyl-L-methionine. The Proton acceptor role is filled by Lys157. A disordered region spans residues 332–367 (ISLSSEEEGDEEESAAETKQASEEEEEREEEEQLNR). Phosphoserine is present on residues Ser333, Ser335, Ser336, Ser345, and Ser353. Residues 336-346 (SEEEGDEEESA) show a composition bias toward acidic residues. The span at 354-363 (EEEEEREEEE) shows a compositional bias: acidic residues. A Citrulline modification is found at Arg389. 2 disordered regions span residues 443–508 (FLSD…PLLV) and 528–634 (DGFS…GFEV). The segment covering 456–473 (DAEDDDDTSLESDLDPEE) has biased composition (acidic residues). A phosphoserine mark is found at Ser531 and Ser544. Residue Lys570 forms a Glycyl lysine isopeptide (Lys-Gly) (interchain with G-Cter in SUMO2) linkage. At Ser575 the chain carries Phosphoserine. Residues Lys626 and Lys642 each participate in a glycyl lysine isopeptide (Lys-Gly) (interchain with G-Cter in SUMO2) cross-link. A Phosphoserine modification is found at Ser659. Residue Lys661 forms a Glycyl lysine isopeptide (Lys-Gly) (interchain with G-Cter in SUMO2) linkage. At Ser671 the chain carries Phosphoserine. Lys693 is covalently cross-linked (Glycyl lysine isopeptide (Lys-Gly) (interchain with G-Cter in SUMO2)). Residues 722–760 (IKKVAEAKARKKRRMLKKLEQTKKKAEAVVNTVDISERE) are a coiled coil. Arg766 is subject to Citrulline. A compositionally biased stretch (basic residues) spans 794–804 (VRRPAGVRGHF). The tract at residues 794–829 (VRRPAGVRGHFKVVDSRMKKDQRAQRKEQKRNHRRK) is disordered. The span at 805-820 (KVVDSRMKKDQRAQRK) shows a compositional bias: basic and acidic residues.

Belongs to the class I-like SAM-binding methyltransferase superfamily. RNA methyltransferase RlmE family. SPB1 subfamily. Interacts with NIP7. Post-translationally, citrullinated by PADI4.

It is found in the nucleus. It localises to the nucleolus. The catalysed reaction is a ribonucleotide in rRNA + S-adenosyl-L-methionine = a 2'-O-methylribonucleotide in rRNA + S-adenosyl-L-homocysteine + H(+). In terms of biological role, RNA 2'-O-methyltransferase involved in the processing of the 34S pre-rRNA to 18S rRNA and in 40S ribosomal subunit formation. The polypeptide is pre-rRNA 2'-O-ribose RNA methyltransferase FTSJ3 (Ftsj3) (Rattus norvegicus (Rat)).